Here is a 473-residue protein sequence, read N- to C-terminus: Photosystem II CP43 reaction center protein (473 aa).

Positions 1–14 are excised as a propeptide; that stretch reads MKTLYSLRRFYHVE. An N-acetylthreonine modification is found at T15. T15 is modified (phosphothreonine). 5 consecutive transmembrane segments (helical) span residues 69 to 93, 134 to 155, 178 to 200, 255 to 275, and 291 to 312; these read LFEV…PHLA, LLGP…KDRN, KALY…RKIT, KPFA…LSYS, and WFNN…ASQA. A [CaMn4O5] cluster-binding site is contributed by E367. The helical transmembrane segment at 447-471 threads the bilayer; the sequence is RARAAAAGFEKGIDRDLEPVLFMTP.

It belongs to the PsbB/PsbC family. PsbC subfamily. PSII is composed of 1 copy each of membrane proteins PsbA, PsbB, PsbC, PsbD, PsbE, PsbF, PsbH, PsbI, PsbJ, PsbK, PsbL, PsbM, PsbT, PsbX, PsbY, PsbZ, Psb30/Ycf12, at least 3 peripheral proteins of the oxygen-evolving complex and a large number of cofactors. It forms dimeric complexes. The cofactor is Binds multiple chlorophylls and provides some of the ligands for the Ca-4Mn-5O cluster of the oxygen-evolving complex. It may also provide a ligand for a Cl- that is required for oxygen evolution. PSII binds additional chlorophylls, carotenoids and specific lipids..

The protein resides in the plastid. The protein localises to the chloroplast thylakoid membrane. In terms of biological role, one of the components of the core complex of photosystem II (PSII). It binds chlorophyll and helps catalyze the primary light-induced photochemical processes of PSII. PSII is a light-driven water:plastoquinone oxidoreductase, using light energy to abstract electrons from H(2)O, generating O(2) and a proton gradient subsequently used for ATP formation. The protein is Photosystem II CP43 reaction center protein of Carica papaya (Papaya).